A 212-amino-acid chain; its full sequence is MQEYNNQDYKQPLRIGVGGPVGSGKTALLEILCKTIRDKYQIAVVTNDIYTQEDAKILTRAQALDADRIIGVETGGCPHTAIREDASMNLAAVEELAKRHKNLDLVFVESGGDNLSATFSPELADLTIYVIDVAEGEKIPRKGGPGITRSDLLVINKIDLAPYVGASLDVMEADTARMRPEKPYVFTNLKEGIGLQKIIDFIVDKGMLPKVD.

19–26 (GPVGSGKT) is a GTP binding site.

Belongs to the SIMIBI class G3E GTPase family. UreG subfamily. In terms of assembly, homodimer. UreD, UreF and UreG form a complex that acts as a GTP-hydrolysis-dependent molecular chaperone, activating the urease apoprotein by helping to assemble the nickel containing metallocenter of UreC. The UreE protein probably delivers the nickel.

The protein localises to the cytoplasm. Facilitates the functional incorporation of the urease nickel metallocenter. This process requires GTP hydrolysis, probably effectuated by UreG. The chain is Urease accessory protein UreG from Vibrio parahaemolyticus.